Consider the following 423-residue polypeptide: Serine hydroxymethyltransferase (423 aa).

Residues Leu120 and Gly124–Leu126 each bind (6S)-5,6,7,8-tetrahydrofolate. The residue at position 229 (Lys229) is an N6-(pyridoxal phosphate)lysine. Ser353–Phe355 is a binding site for (6S)-5,6,7,8-tetrahydrofolate.

Belongs to the SHMT family. As to quaternary structure, homodimer. Requires pyridoxal 5'-phosphate as cofactor.

The protein localises to the cytoplasm. It catalyses the reaction (6R)-5,10-methylene-5,6,7,8-tetrahydrofolate + glycine + H2O = (6S)-5,6,7,8-tetrahydrofolate + L-serine. It participates in one-carbon metabolism; tetrahydrofolate interconversion. The protein operates within amino-acid biosynthesis; glycine biosynthesis; glycine from L-serine: step 1/1. In terms of biological role, catalyzes the reversible interconversion of serine and glycine with tetrahydrofolate (THF) serving as the one-carbon carrier. This reaction serves as the major source of one-carbon groups required for the biosynthesis of purines, thymidylate, methionine, and other important biomolecules. Also exhibits THF-independent aldolase activity toward beta-hydroxyamino acids, producing glycine and aldehydes, via a retro-aldol mechanism. This is Serine hydroxymethyltransferase from Synechococcus sp. (strain RCC307).